A 1201-amino-acid polypeptide reads, in one-letter code: Transcription-repair-coupling factor (1201 aa).

Residues 1-27 (MRLLITLGPSGSTHGHSLHTDAGRRRG) form a disordered region. In terms of domain architecture, Helicase ATP-binding spans 670–831 (DMQKPEPMDR…MSGVRDMSII (162 aa)). Residue 683–690 (GDVGYGKT) coordinates ATP. The DEEQ box signature appears at 784–787 (DEEQ). Positions 852 to 1006 (VVKEAIEREV…GFSIASHDLE (155 aa)) constitute a Helicase C-terminal domain.

The protein in the N-terminal section; belongs to the UvrB family. It in the C-terminal section; belongs to the helicase family. RecG subfamily.

It is found in the cytoplasm. Couples transcription and DNA repair by recognizing RNA polymerase (RNAP) stalled at DNA lesions. Mediates ATP-dependent release of RNAP and its truncated transcript from the DNA, and recruitment of nucleotide excision repair machinery to the damaged site. The chain is Transcription-repair-coupling factor from Myxococcus xanthus.